The sequence spans 106 residues: Thiosulfate sulfurtransferase GlpE (106 aa).

One can recognise a Rhodanese domain in the interval 17–105 (EQSEAKLVDI…WQRAELPIVR (89 aa)). The active-site Cysteine persulfide intermediate is Cys-65.

This sequence belongs to the GlpE family.

The protein localises to the cytoplasm. It carries out the reaction thiosulfate + hydrogen cyanide = thiocyanate + sulfite + 2 H(+). The catalysed reaction is thiosulfate + [thioredoxin]-dithiol = [thioredoxin]-disulfide + hydrogen sulfide + sulfite + 2 H(+). In terms of biological role, transferase that catalyzes the transfer of sulfur from thiosulfate to thiophilic acceptors such as cyanide or dithiols. May function in a CysM-independent thiosulfate assimilation pathway by catalyzing the conversion of thiosulfate to sulfite, which can then be used for L-cysteine biosynthesis. This Vibrio campbellii (strain ATCC BAA-1116) protein is Thiosulfate sulfurtransferase GlpE.